The chain runs to 310 residues: HPr kinase/phosphorylase (310 aa).

Catalysis depends on residues histidine 138 and lysine 159. 153 to 160 (GKSGVGKS) serves as a coordination point for ATP. Serine 160 is a Mg(2+) binding site. Aspartate 177 (proton acceptor; for phosphorylation activity. Proton donor; for dephosphorylation activity) is an active-site residue. An important for the catalytic mechanism of both phosphorylation and dephosphorylation region spans residues 201 to 210 (LEIRGLGIIN). Glutamate 202 provides a ligand contact to Mg(2+). Arginine 243 is a catalytic residue. Residues 264-269 (PVRPGR) form an important for the catalytic mechanism of dephosphorylation region.

It belongs to the HPrK/P family. As to quaternary structure, homohexamer. Mg(2+) is required as a cofactor.

The catalysed reaction is [HPr protein]-L-serine + ATP = [HPr protein]-O-phospho-L-serine + ADP + H(+). It carries out the reaction [HPr protein]-O-phospho-L-serine + phosphate + H(+) = [HPr protein]-L-serine + diphosphate. Its function is as follows. Catalyzes the ATP- as well as the pyrophosphate-dependent phosphorylation of a specific serine residue in HPr, a phosphocarrier protein of the phosphoenolpyruvate-dependent sugar phosphotransferase system (PTS). HprK/P also catalyzes the pyrophosphate-producing, inorganic phosphate-dependent dephosphorylation (phosphorolysis) of seryl-phosphorylated HPr (P-Ser-HPr). The two antagonistic activities of HprK/P are regulated by several intracellular metabolites, which change their concentration in response to the absence or presence of rapidly metabolisable carbon sources (glucose, fructose, etc.) in the growth medium. Also phosphorylates/dephosphorylates the HPr-like catabolite repression protein crh on a specific serine residue. Therefore, by controlling the phosphorylation state of HPr and crh, HPrK/P is a sensor enzyme that plays a major role in the regulation of carbon metabolism and sugar transport: it mediates carbon catabolite repression (CCR), and regulates PTS-catalyzed carbohydrate uptake and inducer exclusion. The protein is HPr kinase/phosphorylase of Bacillus velezensis (strain DSM 23117 / BGSC 10A6 / LMG 26770 / FZB42) (Bacillus amyloliquefaciens subsp. plantarum).